The primary structure comprises 344 residues: tRNA N6-adenosine threonylcarbamoyltransferase (344 aa).

Residues His111 and His115 each coordinate Fe cation. Substrate-binding positions include 133-137 (LVSGG), Asp166, Gly179, and Asn283. Position 311 (Asp311) interacts with Fe cation.

Belongs to the KAE1 / TsaD family. It depends on Fe(2+) as a cofactor.

The protein localises to the cytoplasm. The enzyme catalyses L-threonylcarbamoyladenylate + adenosine(37) in tRNA = N(6)-L-threonylcarbamoyladenosine(37) in tRNA + AMP + H(+). Required for the formation of a threonylcarbamoyl group on adenosine at position 37 (t(6)A37) in tRNAs that read codons beginning with adenine. Is involved in the transfer of the threonylcarbamoyl moiety of threonylcarbamoyl-AMP (TC-AMP) to the N6 group of A37, together with TsaE and TsaB. TsaD likely plays a direct catalytic role in this reaction. The protein is tRNA N6-adenosine threonylcarbamoyltransferase of Orientia tsutsugamushi (strain Boryong) (Rickettsia tsutsugamushi).